Here is a 208-residue protein sequence, read N- to C-terminus: Thymidylate kinase (208 aa).

7–14 serves as a coordination point for ATP; it reads GIDGAGKT.

It belongs to the thymidylate kinase family.

It catalyses the reaction dTMP + ATP = dTDP + ADP. In terms of biological role, phosphorylation of dTMP to form dTDP in both de novo and salvage pathways of dTTP synthesis. The chain is Thymidylate kinase (tmk) from Xylella fastidiosa (strain 9a5c).